Here is a 234-residue protein sequence, read N- to C-terminus: 5'-methylthioadenosine/S-adenosylhomocysteine nucleosidase (234 aa).

E12 serves as the catalytic Proton acceptor. Residues G78, I152, and 173 to 174 (ME) each bind substrate. D197 functions as the Proton donor in the catalytic mechanism.

It belongs to the PNP/UDP phosphorylase family. MtnN subfamily.

The catalysed reaction is S-adenosyl-L-homocysteine + H2O = S-(5-deoxy-D-ribos-5-yl)-L-homocysteine + adenine. It catalyses the reaction S-methyl-5'-thioadenosine + H2O = 5-(methylsulfanyl)-D-ribose + adenine. The enzyme catalyses 5'-deoxyadenosine + H2O = 5-deoxy-D-ribose + adenine. It functions in the pathway amino-acid biosynthesis; L-methionine biosynthesis via salvage pathway; S-methyl-5-thio-alpha-D-ribose 1-phosphate from S-methyl-5'-thioadenosine (hydrolase route): step 1/2. In terms of biological role, catalyzes the irreversible cleavage of the glycosidic bond in both 5'-methylthioadenosine (MTA) and S-adenosylhomocysteine (SAH/AdoHcy) to adenine and the corresponding thioribose, 5'-methylthioribose and S-ribosylhomocysteine, respectively. Also cleaves 5'-deoxyadenosine, a toxic by-product of radical S-adenosylmethionine (SAM) enzymes, into 5-deoxyribose and adenine. This Desulfotalea psychrophila (strain LSv54 / DSM 12343) protein is 5'-methylthioadenosine/S-adenosylhomocysteine nucleosidase.